We begin with the raw amino-acid sequence, 321 residues long: Glucokinase (321 aa).

8–13 contributes to the ATP binding site; sequence GDVGGT.

It belongs to the bacterial glucokinase family.

The protein resides in the cytoplasm. It carries out the reaction D-glucose + ATP = D-glucose 6-phosphate + ADP + H(+). This Klebsiella pneumoniae subsp. pneumoniae (strain ATCC 700721 / MGH 78578) protein is Glucokinase.